The chain runs to 315 residues: GTP cyclohydrolase MptA (315 aa).

It belongs to the GTP cyclohydrolase IV family. Homodimer. Requires Fe(2+) as cofactor.

It carries out the reaction GTP + H2O = 7,8-dihydroneopterin 2',3'-cyclic phosphate + formate + diphosphate + H(+). Its pathway is cofactor biosynthesis; 5,6,7,8-tetrahydromethanopterin biosynthesis. Converts GTP to 7,8-dihydro-D-neopterin 2',3'-cyclic phosphate, the first intermediate in the biosynthesis of coenzyme methanopterin. This Methanococcus maripaludis (strain C6 / ATCC BAA-1332) protein is GTP cyclohydrolase MptA.